Consider the following 120-residue polypeptide: MSNPVTITEAAALHIKDMMKEHEEENAFLRVGVKGGGCSGLSYGMGFEHEKSESDSVFDQHGITVLVDKESLDIMNGTVIDYKQSMLGGGFTIDNPNAIASCGCGSSFRTATNAGKPEEC.

It belongs to the HesB/IscA family.

This is an uncharacterized protein from Bacillus subtilis (strain 168).